The primary structure comprises 188 residues: Threonylcarbamoyl-AMP synthase (188 aa).

The 186-residue stretch at 3-188 folds into the YrdC-like domain; it reads QLHPSDIKDI…RSGKILRNGQ (186 aa).

The protein belongs to the SUA5 family. TsaC subfamily.

The protein localises to the cytoplasm. It catalyses the reaction L-threonine + hydrogencarbonate + ATP = L-threonylcarbamoyladenylate + diphosphate + H2O. Required for the formation of a threonylcarbamoyl group on adenosine at position 37 (t(6)A37) in tRNAs that read codons beginning with adenine. Catalyzes the conversion of L-threonine, HCO(3)(-)/CO(2) and ATP to give threonylcarbamoyl-AMP (TC-AMP) as the acyladenylate intermediate, with the release of diphosphate. This is Threonylcarbamoyl-AMP synthase from Shewanella putrefaciens (strain CN-32 / ATCC BAA-453).